Consider the following 146-residue polypeptide: Holo-[acyl-carrier-protein] synthase (146 aa).

The Mg(2+) site is built by aspartate 9 and glutamate 63.

Belongs to the P-Pant transferase superfamily. AcpS family. The cofactor is Mg(2+).

It localises to the cytoplasm. It catalyses the reaction apo-[ACP] + CoA = holo-[ACP] + adenosine 3',5'-bisphosphate + H(+). In terms of biological role, transfers the 4'-phosphopantetheine moiety from coenzyme A to a Ser of acyl-carrier-protein. This chain is Holo-[acyl-carrier-protein] synthase, found in Burkholderia ambifaria (strain MC40-6).